The chain runs to 274 residues: S-adenosylmethionine decarboxylase proenzyme (274 aa).

Ser-119 (schiff-base intermediate with substrate; via pyruvic acid) is an active-site residue. Ser-119 is modified (pyruvic acid (Ser); by autocatalysis). The active-site Proton acceptor; for processing activity is His-124. The active-site Proton donor; for catalytic activity is the Cys-147.

It belongs to the prokaryotic AdoMetDC family. Type 2 subfamily. In terms of assembly, heterooctamer of four alpha and four beta chains arranged as a tetramer of alpha/beta heterodimers. It depends on pyruvate as a cofactor. Post-translationally, is synthesized initially as an inactive proenzyme. Formation of the active enzyme involves a self-maturation process in which the active site pyruvoyl group is generated from an internal serine residue via an autocatalytic post-translational modification. Two non-identical subunits are generated from the proenzyme in this reaction, and the pyruvate is formed at the N-terminus of the alpha chain, which is derived from the carboxyl end of the proenzyme. The post-translation cleavage follows an unusual pathway, termed non-hydrolytic serinolysis, in which the side chain hydroxyl group of the serine supplies its oxygen atom to form the C-terminus of the beta chain, while the remainder of the serine residue undergoes an oxidative deamination to produce ammonia and the pyruvoyl group blocking the N-terminus of the alpha chain.

It catalyses the reaction S-adenosyl-L-methionine + H(+) = S-adenosyl 3-(methylsulfanyl)propylamine + CO2. It functions in the pathway amine and polyamine biosynthesis; S-adenosylmethioninamine biosynthesis; S-adenosylmethioninamine from S-adenosyl-L-methionine: step 1/1. Catalyzes the decarboxylation of S-adenosylmethionine to S-adenosylmethioninamine (dcAdoMet), the propylamine donor required for the synthesis of the polyamines spermine and spermidine from the diamine putrescine. The sequence is that of S-adenosylmethionine decarboxylase proenzyme from Clostridium acetobutylicum (strain ATCC 824 / DSM 792 / JCM 1419 / IAM 19013 / LMG 5710 / NBRC 13948 / NRRL B-527 / VKM B-1787 / 2291 / W).